Reading from the N-terminus, the 193-residue chain is Translocation protein SEC72 (193 aa).

In terms of assembly, component of the heterotetrameric Sec62/63complex composed of SEC62, SEC63, SEC71 and SEC72. The Sec62/63 complex associates with the Sec61 complex to form the Sec complex. May interact with protein YLR301W. Part of a complex consisting of KAR2, SEC63, SEC66 and SEC72.

The protein resides in the cytoplasm. Functionally, acts as a non-essential component of the Sec62/63 complex which is involved in SRP-independent post-translational translocation across the endoplasmic reticulum (ER) and functions together with the Sec61 complex and KAR2 in a channel-forming translocon complex. A cycle of assembly and disassembly of Sec62/63 complex from SEC61 may govern the activity of the translocon. SEC72 may be involved in signal peptide recognition for a defined subset of leader peptides, or may increase the efficiency of unusual or 'difficult' secretory precursors to the translocation pore, it may be that this protein binds charged leader peptides to the membrane until they engage the translocation apparatus. This is Translocation protein SEC72 (SEC72) from Saccharomyces cerevisiae (strain ATCC 204508 / S288c) (Baker's yeast).